A 541-amino-acid polypeptide reads, in one-letter code: Solute carrier family 2, facilitated glucose transporter member 10 (541 aa).

Topologically, residues 1–15 (MGHSPPVLPLCASVS) are cytoplasmic. The helical transmembrane segment at 16-36 (LLGGLTFGYELAVISGALLPL) threads the bilayer. The Extracellular segment spans residues 37-48 (QLDFGLSCLEQE). The chain crosses the membrane as a helical span at residues 49–69 (FLVGSLLLGALLASLVGGFLI). Residues 70-77 (DCYGRKQA) are Cytoplasmic-facing. A helical transmembrane segment spans residues 78 to 98 (ILGSNLVLLAGSLTLGLAGSL). The Extracellular segment spans residues 99-106 (AWLVLGRA). Residues 107–127 (VVGFAISLSSMACCIYVSELV) traverse the membrane as a helical segment. Residues 128 to 134 (GPRQRGV) lie on the Cytoplasmic side of the membrane. A helical membrane pass occupies residues 135–155 (LVSLYEAGITVGILLSYALNY). Residues 156-166 (ALAGTPWGWRH) are Extracellular-facing. The chain crosses the membrane as a helical span at residues 167-187 (MFGWATAPAVLQSLSLLFLPA). At 188–233 (GTDETATHKDLIPLQGGEAPKLGPGRPRYSFLDLFRARDNMRGRTT) the chain is on the cytoplasmic side. The helical transmembrane segment at 234 to 254 (VGLGLVLFQQLTGQPNVLCYA) threads the bilayer. 242–243 (QQ) contributes to the D-glucose binding site. The Extracellular portion of the chain corresponds to 255–269 (STIFSSVGFHGGSSA). The chain crosses the membrane as a helical span at residues 270–290 (VLASVGLGAVKVAATLTAMGL). Residues 291–298 (VDRAGRRA) are Cytoplasmic-facing. A helical membrane pass occupies residues 299 to 319 (LLLAGCALMALSVSGIGLVSF). Over 320-414 (AVPMDSGPSC…HALLRWTALL (95 aa)) the chain is Extracellular. A glycan (N-linked (GlcNAc...) asparagine) is linked at N334. The tract at residues 340-388 (GLPGDSGLLQDSSLPPIPRTNEDQREPILSTAKKTKPHPRSGDPSAPPR) is disordered. A helical transmembrane segment spans residues 415–435 (CLMVFVSAFSFGFGPVTWLVL). D-glucose is bound at residue W432. Residues 436–445 (SEIYPVEIRG) are Cytoplasmic-facing. The helical transmembrane segment at 446 to 466 (RAFAFCNSFNWAANLFISLSF) threads the bilayer. Topologically, residues 467 to 476 (LDLIGTIGLS) are extracellular. The chain crosses the membrane as a helical span at residues 477–497 (WTFLLYGLTAVLGLGFIYLFV). Over 498–541 (PETKGQSLAEIDQQFQKRRFTLSFGHRQNSTGIPYSRIEISAAS) the chain is Cytoplasmic.

Belongs to the major facilitator superfamily. Sugar transporter (TC 2.A.1.1) family. Glucose transporter subfamily. As to expression, widely expressed; highest levels in liver and pancreas.

Its subcellular location is the endomembrane system. The protein localises to the cytoplasm. It is found in the perinuclear region. It catalyses the reaction D-glucose(out) = D-glucose(in). Functionally, facilitative glucose transporter required for the development of the cardiovascular system. The protein is Solute carrier family 2, facilitated glucose transporter member 10 of Homo sapiens (Human).